The following is an 884-amino-acid chain: Alanine--tRNA ligase (884 aa).

4 residues coordinate Zn(2+): H565, H569, C672, and H676.

It belongs to the class-II aminoacyl-tRNA synthetase family. Requires Zn(2+) as cofactor.

It is found in the cytoplasm. The enzyme catalyses tRNA(Ala) + L-alanine + ATP = L-alanyl-tRNA(Ala) + AMP + diphosphate. Functionally, catalyzes the attachment of alanine to tRNA(Ala) in a two-step reaction: alanine is first activated by ATP to form Ala-AMP and then transferred to the acceptor end of tRNA(Ala). Also edits incorrectly charged Ser-tRNA(Ala) and Gly-tRNA(Ala) via its editing domain. This Sphingopyxis alaskensis (strain DSM 13593 / LMG 18877 / RB2256) (Sphingomonas alaskensis) protein is Alanine--tRNA ligase.